The chain runs to 196 residues: Oplophorus-luciferin 2-monooxygenase catalytic subunit (196 aa).

Residues Met1–Thr27 form the signal peptide.

Heterotetramer of a catalytic 19 kDa and a non-catalytic 35 kDa subunit.

The protein resides in the secreted. The catalysed reaction is coelenterazine + O2 = coelenteramide + hnu + CO2. With respect to regulation, inhibited by micromolar Cu(2+). Functionally, catalytic subunit of oplophorus-luciferin 2-monooxygenase. Oxidoreductase that converts coelenterazine (the oplophorus luciferin) to coelenteramide under emission of blue light with a maximum at 454 nm. Is also active with bisdeoxycoelenterazine. The protein is Oplophorus-luciferin 2-monooxygenase catalytic subunit of Oplophorus gracilirostris (Luminous shrimp).